The primary structure comprises 340 residues: Serine/threonine-protein kinase PDIK1L (340 aa).

Residues 8-333 (YDLIREVGRG…LELRLVQIAF (326 aa)) enclose the Protein kinase domain. ATP contacts are provided by residues 14 to 22 (VGRGSYGVV) and lysine 37. The active-site Proton acceptor is the aspartate 164.

This sequence belongs to the protein kinase superfamily. Ser/Thr protein kinase family.

It localises to the nucleus. It catalyses the reaction L-seryl-[protein] + ATP = O-phospho-L-seryl-[protein] + ADP + H(+). The enzyme catalyses L-threonyl-[protein] + ATP = O-phospho-L-threonyl-[protein] + ADP + H(+). In Pongo abelii (Sumatran orangutan), this protein is Serine/threonine-protein kinase PDIK1L (PDIK1L).